The sequence spans 376 residues: Protein-glutamate methylesterase/protein-glutamine glutaminase 1 (376 aa).

Residues 4–121 form the Response regulatory domain; it reads KVLVVDDSSF…ARNRDEAVSL (118 aa). The residue at position 55 (Asp55) is a 4-aspartylphosphate. Positions 138–169 are disordered; sequence RPVASSTPVQERPQSTLNRPTTGLRREASAQA. Positions 141-158 are enriched in polar residues; the sequence is ASSTPVQERPQSTLNRPT. The 194-residue stretch at 183 to 376 folds into the CheB-type methylesterase domain; sequence SGKKYQLTAI…ERMLVEVGLA (194 aa). Residues Ser195, His222, and Asp318 contribute to the active site.

It belongs to the CheB family. Phosphorylated by CheA. Phosphorylation of the N-terminal regulatory domain activates the methylesterase activity.

Its subcellular location is the cytoplasm. It carries out the reaction [protein]-L-glutamate 5-O-methyl ester + H2O = L-glutamyl-[protein] + methanol + H(+). The catalysed reaction is L-glutaminyl-[protein] + H2O = L-glutamyl-[protein] + NH4(+). Involved in chemotaxis. Part of a chemotaxis signal transduction system that modulates chemotaxis in response to various stimuli. Catalyzes the demethylation of specific methylglutamate residues introduced into the chemoreceptors (methyl-accepting chemotaxis proteins or MCP) by CheR. Also mediates the irreversible deamidation of specific glutamine residues to glutamic acid. The chain is Protein-glutamate methylesterase/protein-glutamine glutaminase 1 from Vibrio vulnificus (strain YJ016).